The chain runs to 452 residues: Probable diguanylate cyclase DgcT (452 aa).

Over 1–7 (MEKDYLR) the chain is Cytoplasmic. The chain crosses the membrane as a helical span at residues 8–28 (ISSTVLVSLLFGLALVLVNSW). Topologically, residues 29–45 (FNQPGVEEVVPRSTYLM) are periplasmic. Residues 46-66 (VMIALFFIDTVAFIFMQLYFI) form a helical membrane-spanning segment. The Cytoplasmic segment spans residues 67–74 (YDRRQFSN). Residues 75–95 (CVLSLAFLSCLIYFVITVIII) traverse the membrane as a helical segment. At 96–111 (QQIIEERLTSSVVQND) the chain is on the periplasmic side. A helical transmembrane segment spans residues 112–132 (IAIYYLFRQMSLCILIFLALV). At 133–148 (NKVSENTKQRNLFSKK) the chain is on the cytoplasmic side. The helical transmembrane segment at 149-169 (MTLCISLFFVFGGPIVAHILS) threads the bilayer. The Periplasmic segment spans residues 170 to 195 (SHYESYNLHIAELTNENGQVVWKASY). A helical transmembrane segment spans residues 196-216 (VTIMIFMWLTLLSVNLYFNGL). Topologically, residues 217–219 (RYD) are cytoplasmic. The helical transmembrane segment at 220–240 (IWNGVTVIAFCAVLYNISLLF) threads the bilayer. At 241 to 254 (MSRYSVSTWYISRT) the chain is on the periplasmic side. Residues 255–275 (IEVVSKLTVMVIFMCHIFSAL) traverse the membrane as a helical segment. The Cytoplasmic segment spans residues 276 to 452 (RVTKNIAHRD…RDVVNFCESP (177 aa)). One can recognise a GGDEF domain in the interval 310-445 (TPYCVMIMDI…GRNKVVVRDV (136 aa)). Residues Asp-318 and Ile-319 each coordinate Mg(2+). Substrate-binding residues include Asn-326, His-331, and Asp-335. Glu-361 contributes to the Mg(2+) binding site. Glu-361 (proton acceptor) is an active-site residue. Arg-381 serves as a coordination point for substrate.

Homodimer. The cofactor is Mg(2+).

The protein resides in the cell inner membrane. The catalysed reaction is 2 GTP = 3',3'-c-di-GMP + 2 diphosphate. Its pathway is purine metabolism; 3',5'-cyclic di-GMP biosynthesis. Functionally, probably catalyzes the synthesis of cyclic-di-GMP (c-di-GMP) via the condensation of 2 GTP molecules. Overexpression leads to a strong repression of swimming; swimming returns to normal when residues 359-360 are both mutated to Ala. Overexpression also leads to a 20-fold increase in c-di-GMP levels in vivo. Cyclic-di-GMP is a second messenger which controls cell surface-associated traits in bacteria. The polypeptide is Probable diguanylate cyclase DgcT (Escherichia coli (strain K12)).